The primary structure comprises 162 residues: Ribonuclease (162 aa).

A signal peptide spans 1 to 29; the sequence is MKKISSVFTMFALIAAILFSGFIPQQAYA. A propeptide spanning residues 30–53 is cleaved from the precursor; sequence ETPLTQTATNETATIQLTSDVHTL. The active-site Proton acceptor is the glutamate 125. Histidine 154 functions as the Proton donor in the catalytic mechanism.

The protein belongs to the ribonuclease N1/T1 family.

The protein resides in the secreted. Functionally, this is a purine-specific ribonuclease. This chain is Ribonuclease, found in Bacillus intermedius.